We begin with the raw amino-acid sequence, 200 residues long: Ras-related protein Rab-10 (200 aa).

GTP contacts are provided by Ser-18, Gly-19, Val-20, Gly-21, Lys-22, Thr-23, Cys-24, Asn-35, Thr-36, Ser-40, and Thr-41. Thr-23 contacts Mg(2+). 2 consecutive short sequence motifs (switch) follow at residues 32–46 (DAFNTTFISTIGIDF) and 64–81 (DTAGQERFHTITTSYYRG). The Mg(2+) site is built by Thr-41 and Asp-64. Residues Gly-67, Asn-122, Lys-123, Asp-125, Met-126, Ser-152, Ala-153, and Lys-154 each contribute to the GTP site. Positions 181–200 (RENVDISTTGGGTGLKKCCS) are disordered. S-geranylgeranyl cysteine attachment occurs at residues Cys-198 and Cys-199.

It belongs to the small GTPase superfamily. Rab family. The cofactor is Mg(2+).

Its subcellular location is the cytoplasmic vesicle membrane. It localises to the golgi apparatus. The protein localises to the trans-Golgi network membrane. It is found in the endosome membrane. The protein resides in the recycling endosome membrane. Its subcellular location is the cytoplasmic vesicle. It localises to the phagosome membrane. The protein localises to the cell projection. It is found in the cilium. The protein resides in the endoplasmic reticulum membrane. The enzyme catalyses GTP + H2O = GDP + phosphate + H(+). With respect to regulation, regulated by guanine nucleotide exchange factors (GEFs) which promote the exchange of bound GDP for free GTP. Regulated by GTPase activating proteins (GAPs) which increase the GTP hydrolysis activity. Inhibited by GDP dissociation inhibitors (GDIs) which prevent Rab-GDP dissociation. In terms of biological role, the small GTPases Rab are key regulators of intracellular membrane trafficking, from the formation of transport vesicles to their fusion with membranes. Rabs cycle between an inactive GDP-bound form and an active GTP-bound form that is able to recruit to membranes different set of downstream effectors directly responsible for vesicle formation, movement, tethering and fusion. That Rab is mainly involved in the biosynthetic transport of proteins from the Golgi to the plasma membrane. Also plays a specific role in asymmetric protein transport to the plasma membrane within the polarized neuron and epithelial cells. In neurons, it is involved in axonogenesis through regulation of vesicular membrane trafficking toward the axonal plasma membrane while in epithelial cells, it regulates transport from the Golgi to the basolateral membrane. Moreover, may play a role in the basolateral recycling pathway and in phagosome maturation. Finally, may play a role in endoplasmic reticulum dynamics and morphology controlling tubulation along microtubules and tubules fusion. May participate in the export of neosynthesized proteins through a Rab-dependent endosomal export route. This chain is Ras-related protein Rab-10, found in Diplobatis ommata (Ocellated electric ray).